Consider the following 162-residue polypeptide: UPF0114 protein PSEEN0819 (162 aa).

3 helical membrane passes run 15–35 (LLAP…LKFF), 53–73 (LVLV…LVMV), and 136–156 (LMWY…MGYL).

It belongs to the UPF0114 family.

It is found in the cell membrane. This Pseudomonas entomophila (strain L48) protein is UPF0114 protein PSEEN0819.